A 505-amino-acid polypeptide reads, in one-letter code: MGQKAKAQAPTTHPRPHTLSSQVAPALPRRPRHAAPESLRQARGEVMKAHLITYGCQMNEYDTHLVQSQLVSFGADIVESPDEADFVLVNTCAVRGKPVDKVRSLLGDLRKQKAQRSLVVGMMGCLAQLEEGQQIARKFEVDVLLGPGSLLDIGAALESNERFWGLQFKDELHDHIPPPPSGKLQAHLTIMRGCDHHCTYCIVPTTRGPQVSRHPDDILRELDMQLAAGVREVTLLGQNVNAYGVDQGAKLKGYPSFADLLRMVGASGIERVKFTTSHPMNFTEDVAAAIGETPAICEFVHLPVQSGSDRVLRRMAREYNREKYLTHIAQIKKHIPDVVLATDIIVGFPGETEEDFQDTLSLYDEVGYDSAYMFIYSPRPGTPSYKHFQDLPRELKTERLQRLIARQKDWSARKNAQKVGTVQQVLLRGDAHDAGFLEGHTRGNHPTVVPKAIGADGAGVYQVRIDHATPHMMYGHILGPDGQPLPEQPRFNPEAAAVGGALPML.

Residues 1–39 (MGQKAKAQAPTTHPRPHTLSSQVAPALPRRPRHAAPESL) form a disordered region. An MTTase N-terminal domain is found at 47–162 (MKAHLITYGC…IGAALESNER (116 aa)). Cys-56, Cys-92, Cys-125, Cys-194, Cys-198, and Cys-201 together coordinate [4Fe-4S] cluster. One can recognise a Radical SAM core domain in the interval 180 to 413 (PSGKLQAHLT…IARQKDWSAR (234 aa)). Residues 416-479 (AQKVGTVQQV…PHMMYGHILG (64 aa)) enclose the TRAM domain.

This sequence belongs to the methylthiotransferase family. MiaB subfamily. Monomer. Requires [4Fe-4S] cluster as cofactor.

Its subcellular location is the cytoplasm. It catalyses the reaction N(6)-dimethylallyladenosine(37) in tRNA + (sulfur carrier)-SH + AH2 + 2 S-adenosyl-L-methionine = 2-methylsulfanyl-N(6)-dimethylallyladenosine(37) in tRNA + (sulfur carrier)-H + 5'-deoxyadenosine + L-methionine + A + S-adenosyl-L-homocysteine + 2 H(+). Its function is as follows. Catalyzes the methylthiolation of N6-(dimethylallyl)adenosine (i(6)A), leading to the formation of 2-methylthio-N6-(dimethylallyl)adenosine (ms(2)i(6)A) at position 37 in tRNAs that read codons beginning with uridine. This chain is tRNA-2-methylthio-N(6)-dimethylallyladenosine synthase, found in Deinococcus radiodurans (strain ATCC 13939 / DSM 20539 / JCM 16871 / CCUG 27074 / LMG 4051 / NBRC 15346 / NCIMB 9279 / VKM B-1422 / R1).